Here is a 536-residue protein sequence, read N- to C-terminus: Chaperonin GroEL 2 (536 aa).

Residues 29 to 32, 86 to 90, glycine 412, and aspartate 495 each bind ATP; these read TLGP and DGTTT.

This sequence belongs to the chaperonin (HSP60) family. In terms of assembly, forms a cylinder of 14 subunits composed of two heptameric rings stacked back-to-back. Interacts with the co-chaperonin GroES.

The protein localises to the cytoplasm. The catalysed reaction is ATP + H2O + a folded polypeptide = ADP + phosphate + an unfolded polypeptide.. Together with its co-chaperonin GroES, plays an essential role in assisting protein folding. The GroEL-GroES system forms a nano-cage that allows encapsulation of the non-native substrate proteins and provides a physical environment optimized to promote and accelerate protein folding. The chain is Chaperonin GroEL 2 from Arthrobacter sp. (strain FB24).